Consider the following 122-residue polypeptide: Large ribosomal subunit protein bL19 (122 aa).

This sequence belongs to the bacterial ribosomal protein bL19 family.

Its function is as follows. This protein is located at the 30S-50S ribosomal subunit interface and may play a role in the structure and function of the aminoacyl-tRNA binding site. This is Large ribosomal subunit protein bL19 (rplS) from Synechocystis sp. (strain ATCC 27184 / PCC 6803 / Kazusa).